The chain runs to 507 residues: Cytochrome P450 monooxygenase ptmU (507 aa).

A helical membrane pass occupies residues 4 to 24 (VNAWWVGGSLLLGIWAIVVFF). Asparagine 98, asparagine 202, and asparagine 398 each carry an N-linked (GlcNAc...) asparagine glycan. Residue cysteine 444 participates in heme binding.

It belongs to the cytochrome P450 family. Requires heme as cofactor.

It is found in the membrane. It functions in the pathway secondary metabolite biosynthesis. In terms of biological role, cytochrome P450 monooxygenase; part of the gene cluster that mediates the biosynthesis of the indole diterpenes penitrems. The geranylgeranyl diphosphate (GGPP) synthase ptmG catalyzes the first step in penitrem biosynthesis via conversion of farnesyl pyrophosphate and isopentyl pyrophosphate into geranylgeranyl pyrophosphate (GGPP). Condensation of indole-3-glycerol phosphate with GGPP by the prenyl transferase ptmC then forms 3-geranylgeranylindole (3-GGI). Epoxidation by the FAD-dependent monooxygenase ptmM leads to a epoxidized-GGI that is substrate of the terpene cyclase ptmB for cyclization to yield paspaline. Paspaline is subsequently converted to 13-desoxypaxilline by the cytochrome P450 monooxygenase ptmP, the latter being then converted to paxilline by the cytochrome P450 monooxygenase ptmQ. Paxilline is converted to beta-paxitriol via C-10 ketoreduction by the short-chain dehydrogenase ptmH which can be monoprenylated at the C-20 by the indole diterpene prenyltransferase ptmD. A two-step elimination (acetylation and elimination) process performed by the O-acetyltransferase ptmV and ptmI leads to the production of the prenylated form of penijanthine. The FAD-linked oxidoreductase ptmO then converts the prenylated form of penijanthine into PC-M5 which is in turn transformed into PC-M4 by the aromatic dimethylallyltransferase ptmE. Five sequential oxidative transformations performed by the cytochrome P450 monooxygenases ptmK, ptmU, ptmL, ptmN and ptmJ yield the various penitrem compounds. PtmK, ptmU and ptmM are involved in the formation of the key bicyclic ring of penitrem C via the formation of the intermediates secopenitrem D and penitrem D. PtmL catalyzes the epoxidation of penitrem D and C to yield penitrem B and F, respectively. PtmJ catalyzes the last benzylic hydroxylation to convert penitrem B to prenitrem E and penitrem F to penitrem A. This is Cytochrome P450 monooxygenase ptmU from Penicillium ochrochloron.